The sequence spans 639 residues: MSDKKDQVPGAVEAPRGVSRRSFLGTGAVTGAVLAGATALGAGTFTRESWAAAAKEAKSKIHVGPGELDEYYGFWSGGHQGEVRVLGVPSMRELMRIPVFNVDSATGWGLTNESKRILGDSAKYQNGDCHHPHISMTDGKYDGKYLFINDKANSRVARIRLDIMKCDKILTVPNVQAIHGLRLQKVPYTKYVFANAEFVIPHPNDGHTFDLQDKNSFTMFNAIDAEKMEMAFQVIVDGNLDNSDADYTGKYAASTCYNSEKAYDLGGMMRNERDWVVVFNILRIEAAIKAGKFITLDGSKVPVVDGRKTDGKDSEFTRYIPVPKNPHGLNTSSDGKYFIANGKLSPTVSMIAIDRLDDLFNDRYKDPREVIVAEPELGLGPLHTTFDGRGNAYTTLFIDSQVVKWNMDEAIRAYKGEKVNYIKQKLDVQYQPGHNHASLTETSEADGKWLVVLCKFSKDRFLPTGPLHPENDQLIDISGEEMKLVHDGPAFAEPHDCILARRDQIKTQKIWNRNDPFFADTVALAKKDGINLETDNKVIRDGNKVRVYMTSMAPAYGLTEFTVKQGNEVTVTITNIDQIEDVSHGFVMTNHGASMEISPQQTSSITFTADKAGLHWYYCSWFCHALHMEMVGRMLVEKA.

A signal peptide (tat-type signal) is located at residues 1-54; it reads MSDKKDQVPGAVEAPRGVSRRSFLGTGAVTGAVLAGATALGAGTFTRESWAAAA. Cu cation contacts are provided by His130, His131, and His179. Positions 257, 260, 268, 274, and 325 each coordinate Ca(2+). The Cu cation site is built by His327, His383, and His434. Ca(2+)-binding residues include Lys455 and Glu470. His495, His584, Cys619, Trp621, Cys623, His627, and Met630 together coordinate Cu cation. The segment at 543 to 639 is COX2-like; the sequence is NKVRVYMTSM…MVGRMLVEKA (97 aa).

It belongs to the NosZ family. In the C-terminal section; belongs to the cytochrome c oxidase subunit 2 family. In terms of assembly, homodimer. It depends on Ca(2+) as a cofactor. The cofactor is Cu cation. Post-translationally, predicted to be exported by the Tat system. The position of the signal peptide cleavage has not been experimentally proven.

It is found in the periplasm. It catalyses the reaction N2 + 2 Fe(III)-[cytochrome c] + H2O = nitrous oxide + 2 Fe(II)-[cytochrome c] + 2 H(+). Its pathway is nitrogen metabolism; nitrate reduction (denitrification); dinitrogen from nitrate: step 4/4. Functionally, nitrous-oxide reductase is part of a bacterial respiratory system which is activated under anaerobic conditions in the presence of nitrate or nitrous oxide. The polypeptide is Nitrous-oxide reductase (nosZ) (Pseudomonas fluorescens).